The chain runs to 790 residues: Valine--tRNA ligase (790 aa).

The 'HIGH' region motif lies at 40–50; that stretch reads PTVSGKMHMGH. The 'KMSKS' region signature appears at 521 to 525; that stretch reads KMSKS. An ATP-binding site is contributed by Lys-524.

Belongs to the class-I aminoacyl-tRNA synthetase family. ValS type 2 subfamily.

The protein resides in the cytoplasm. The catalysed reaction is tRNA(Val) + L-valine + ATP = L-valyl-tRNA(Val) + AMP + diphosphate. In terms of biological role, catalyzes the attachment of valine to tRNA(Val). As ValRS can inadvertently accommodate and process structurally similar amino acids such as threonine, to avoid such errors, it has a 'posttransfer' editing activity that hydrolyzes mischarged Thr-tRNA(Val) in a tRNA-dependent manner. The sequence is that of Valine--tRNA ligase from Thermoplasma volcanium (strain ATCC 51530 / DSM 4299 / JCM 9571 / NBRC 15438 / GSS1).